The following is a 581-amino-acid chain: Adenine deaminase (581 aa).

The protein belongs to the metallo-dependent hydrolases superfamily. Adenine deaminase family. The cofactor is Mn(2+).

The enzyme catalyses adenine + H2O + H(+) = hypoxanthine + NH4(+). This is Adenine deaminase from Lysinibacillus sphaericus (strain C3-41).